The following is a 119-amino-acid chain: Basic phospholipase A2 (119 aa).

Disulfide bonds link C11-C71, C27-C118, C29-C45, C44-C99, C51-C92, C60-C85, and C78-C90. Positions 28, 30, and 32 each coordinate Ca(2+). H48 is a catalytic residue. Position 49 (D49) interacts with Ca(2+). Residue D93 is part of the active site.

Belongs to the phospholipase A2 family. Group I subfamily. D49 sub-subfamily. Ca(2+) serves as cofactor. In terms of tissue distribution, expressed by the venom gland.

Its subcellular location is the secreted. It catalyses the reaction a 1,2-diacyl-sn-glycero-3-phosphocholine + H2O = a 1-acyl-sn-glycero-3-phosphocholine + a fatty acid + H(+). Its function is as follows. Snake venom phospholipase A2 (PLA2) that has several activities. It is myotoxic, has weak anticoagulant activity and inhibits neuromuscular transmission by blocking acetylcholine release from the nerve termini. PLA2 catalyzes the calcium-dependent hydrolysis of the 2-acyl groups in 3-sn-phosphoglycerides. This Hydrophis schistosus (Beaked sea snake) protein is Basic phospholipase A2.